Reading from the N-terminus, the 353-residue chain is Probable peptidoglycan glycosyltransferase FtsW (353 aa).

Helical transmembrane passes span 26–46 (IFYFFLIFLLSFILLRIPMSF), 53–73 (LILIISIFLLTIVLLIGKSVH), 115–135 (FWGFLKPITIIIIQSVLLLAE), 137–157 (DLGTVIVLFLTTLSVLFLSGV), 162–182 (FFIIIFFVTLIITALVLFEPY), 242–262 (IIGEELGYIGCFLILLMIFFI), 288–308 (IGLWFSFQTLINIGAVTGILP), and 314–334 (LPLISYGGSSLIVNLMAICIL).

This sequence belongs to the SEDS family. FtsW subfamily.

It localises to the cell inner membrane. The enzyme catalyses [GlcNAc-(1-&gt;4)-Mur2Ac(oyl-L-Ala-gamma-D-Glu-L-Lys-D-Ala-D-Ala)](n)-di-trans,octa-cis-undecaprenyl diphosphate + beta-D-GlcNAc-(1-&gt;4)-Mur2Ac(oyl-L-Ala-gamma-D-Glu-L-Lys-D-Ala-D-Ala)-di-trans,octa-cis-undecaprenyl diphosphate = [GlcNAc-(1-&gt;4)-Mur2Ac(oyl-L-Ala-gamma-D-Glu-L-Lys-D-Ala-D-Ala)](n+1)-di-trans,octa-cis-undecaprenyl diphosphate + di-trans,octa-cis-undecaprenyl diphosphate + H(+). Its pathway is cell wall biogenesis; peptidoglycan biosynthesis. Functionally, peptidoglycan polymerase that is essential for cell division. The protein is Probable peptidoglycan glycosyltransferase FtsW of Buchnera aphidicola subsp. Schizaphis graminum (strain Sg).